The primary structure comprises 466 residues: Reticulophagy regulator 3 (466 aa).

A disordered region spans residues methionine 1–serine 28. An N-acetylalanine modification is found at alanine 2. The Cytoplasmic portion of the chain corresponds to alanine 2–tryptophan 80. A Phosphothreonine modification is found at threonine 10. Residue serine 26 is modified to Phosphoserine. Residues phenylalanine 81–valine 101 traverse the membrane as a helical segment. Topologically, residues cysteine 102–lysine 163 are lumenal. A helical transmembrane segment spans residues glutamine 164 to glycine 184. At arginine 185 to tyrosine 186 the chain is on the cytoplasmic side. The helical transmembrane segment at valine 187–valine 207 threads the bilayer. Residues tyrosine 208–glutamate 381 lie on the Lumenal side of the membrane. Residues serine 258 and serine 260 each carry the phosphoserine modification. A Phosphothreonine modification is found at threonine 283. Positions aspartate 284 to arginine 374 are disordered. Phosphoserine occurs at positions 285, 288, 293, and 303. Positions cysteine 294–threonine 310 are enriched in polar residues. Residues threonine 307 and threonine 310 each carry the phosphothreonine modification. A phosphoserine mark is found at serine 313, serine 320, and serine 360. Residues leucine 316 to proline 331 are compositionally biased toward basic and acidic residues. Residues leucine 382–serine 402 form a helical membrane-spanning segment. Residues glutamine 403–histidine 466 lie on the Cytoplasmic side of the membrane. The tract at residues glycine 412–histidine 466 is disordered. The span at leucine 438–aspartate 451 shows a compositional bias: acidic residues. Threonine 440 is subject to Phosphothreonine. The LIR motif signature appears at aspartate 445 to leucine 450. The segment covering serine 453–histidine 466 has biased composition (polar residues).

The protein belongs to the RETREG family. Interacts with ATG8 family modifier proteins MAP1LC3A, MAP1LC3B, MAP1LC3C, GABARAP, GABARAPL1 and GABARAPL2. Interacts with CANX. Interacts with RTN4 isoform B.

The protein resides in the endoplasmic reticulum membrane. Endoplasmic reticulum (ER)-anchored autophagy regulator which exists in an inactive state under basal conditions but is activated following cellular stress. When activated, induces ER fragmentation and mediates ER delivery into lysosomes through sequestration into autophagosomes via interaction with ATG8 family proteins. Promotes ER membrane curvature and ER tubulation required for subsequent ER fragmentation and engulfment into autophagosomes. Required for collagen quality control in a LIR motif-dependent manner. Mediates NRF1-enhanced neurite outgrowth. The protein is Reticulophagy regulator 3 of Homo sapiens (Human).